The primary structure comprises 729 residues: Catalase-peroxidase (729 aa).

The segment at 1 to 26 is disordered; sequence MTMDQKTDNAGKCPVAHTAPRGRSNR. Positions 97–219 form a cross-link, tryptophyl-tyrosyl-methioninium (Trp-Tyr) (with M-245); it reads WHSAGTYRIT…LAAVQMGLIY (123 aa). Residue H98 is the Proton acceptor of the active site. Residues 219-245 constitute a cross-link (tryptophyl-tyrosyl-methioninium (Tyr-Met) (with W-97)); that stretch reads YVNPEGPNGNPDPVAAAHDIRETFARM. Heme b is bound at residue H260.

This sequence belongs to the peroxidase family. Peroxidase/catalase subfamily. As to quaternary structure, homodimer or homotetramer. Heme b serves as cofactor. Formation of the three residue Trp-Tyr-Met cross-link is important for the catalase, but not the peroxidase activity of the enzyme.

It carries out the reaction H2O2 + AH2 = A + 2 H2O. The catalysed reaction is 2 H2O2 = O2 + 2 H2O. Functionally, bifunctional enzyme with both catalase and broad-spectrum peroxidase activity. This Sinorhizobium medicae (strain WSM419) (Ensifer medicae) protein is Catalase-peroxidase.